A 154-amino-acid polypeptide reads, in one-letter code: Large-conductance mechanosensitive channel (154 aa).

2 helical membrane-spanning segments follow: residues 12–32 (GNIVDLAVAVVIGTAFTALIT) and 71–91 (IVLSAAINFLLIALVVYFLVV). A disordered region spans residues 129–154 (NGAPSGRHVDTADLTPTPNHEPRADT).

This sequence belongs to the MscL family. Homopentamer.

Its subcellular location is the cell membrane. Channel that opens in response to stretch forces in the membrane lipid bilayer. May participate in the regulation of osmotic pressure changes within the cell. The sequence is that of Large-conductance mechanosensitive channel from Mycobacterium leprae (strain Br4923).